A 156-amino-acid chain; its full sequence is Small ribosomal subunit protein uS7 (156 aa).

It belongs to the universal ribosomal protein uS7 family. In terms of assembly, part of the 30S ribosomal subunit. Contacts proteins S9 and S11.

Its function is as follows. One of the primary rRNA binding proteins, it binds directly to 16S rRNA where it nucleates assembly of the head domain of the 30S subunit. Is located at the subunit interface close to the decoding center, probably blocks exit of the E-site tRNA. The chain is Small ribosomal subunit protein uS7 from Leuconostoc mesenteroides subsp. mesenteroides (strain ATCC 8293 / DSM 20343 / BCRC 11652 / CCM 1803 / JCM 6124 / NCDO 523 / NBRC 100496 / NCIMB 8023 / NCTC 12954 / NRRL B-1118 / 37Y).